Here is a 287-residue protein sequence, read N- to C-terminus: CTD small phosphatase-like protein 3 (287 aa).

The FCP1 homology domain maps to 60 to 219 (RSTPEYTLVL…LKLCSFLEAI (160 aa)).

It belongs to the CTDSPL2 family.

Functionally, probable phosphatase. In Caenorhabditis elegans, this protein is CTD small phosphatase-like protein 3 (scpl-3).